Reading from the N-terminus, the 839-residue chain is MAAAVAMRGSSSDGGGYDKVSGMDSGKYVRYTPEQVEALERVYADCPKPTSSRRQQLLRECPILANIEPKQIKVWFQNRRCRDKQRKESSRLQAVNRKLTAMNKLLMEENERLQKQVSQLVHENAHMRQQLQNTPLANDTSCESNVTTPQNPLRDASNPSGLLSIAEETLTEFLSKATGTAIDWVQMPGMKPGPDSVGIVAISHGCRGVAARACGLVNLEPTKVVEILKDRPSWFRDCRNLEVFTMIPAGNGGTVELVYTQLYAPTTLVPARDFWTLRYTTTMEDGSLVVCERSLSGSGGGPSAASAQQYVRAEMLPSGYLVRPCEGGGSIVHIVDHLDLEAWSVPEVLRPLYESSRVVAQKMTTAALRHIRQIAQETSGEVVYALGRQPAVLRTFSQRLSRGFNDAISGFNDDGWSIMGGDGVEDVVIACNSTKKIRSNSNAGIAFGAPGGIICAKASMLLQSVPPAVLVRFLREHRSEWADYNIDAYLASTLKTSACSLPGLRPMRFSGSQIIIPLAHTVENEEILEVVRLEGQPLTHDEALLSRDIHLLQLCTGIDEKSVGSSFQLVFAPIDDFPDETPLISSGFRVIPLDMKTDGASSGRTLDLASSLEVGSATAQASGDASADDCNLRSVLTIAFQFPYELHLQDSVAAMARQYVRSIVSAVQRVSMAISPSQTGLNAGQRIISGFPEAATLARWVCQSYHYHLGVELLSQSDGDAEQLLKMLWHYQDAILCCSFKEKPVFTFANKAGLDMLETSLVALQDLTLDRIFDEPGKEALFSNIPKLMEQGHVYLPSGVCMSGMGRHVSFDQAVAWKVLAEDSNVHCLAFCFVNWSFV.

Disordered stretches follow at residues 1-24 and 132-157; these read MAAA…SGMD and QNTP…RDAS. Positions 24-87 form a DNA-binding region, homeobox; the sequence is DSGKYVRYTP…NRRCRDKQRK (64 aa). Positions 91–134 form a coiled coil; sequence RLQAVNRKLTAMNKLLMEENERLQKQVSQLVHENAHMRQQLQNT. In terms of domain architecture, START spans 155–383; sequence DASNPSGLLS…IAQETSGEVV (229 aa).

Belongs to the HD-ZIP homeobox family. Class III subfamily. In terms of tissue distribution, expressed in stems, leaf sheaths and blades and panicles.

It is found in the nucleus. Its function is as follows. Probable transcription factor. The chain is Homeobox-leucine zipper protein HOX10 (HOX10) from Oryza sativa subsp. indica (Rice).